Reading from the N-terminus, the 120-residue chain is Large ribosomal subunit protein bL20 (120 aa).

This sequence belongs to the bacterial ribosomal protein bL20 family.

In terms of biological role, binds directly to 23S ribosomal RNA and is necessary for the in vitro assembly process of the 50S ribosomal subunit. It is not involved in the protein synthesizing functions of that subunit. In Blochmanniella pennsylvanica (strain BPEN), this protein is Large ribosomal subunit protein bL20.